Reading from the N-terminus, the 84-residue chain is MGFYMLLTVALLLTSLMNVEATPVDQAERSALEKSGLGNRIQPRYDNCGDAEADCYQSKCMDEETYDEECEASCNYVVANCISD.

The first 21 residues, 1 to 21 (MGFYMLLTVALLLTSLMNVEA), serve as a signal peptide directing secretion. Residues 22–39 (TPVDQAERSALEKSGLGN) constitute a propeptide that is removed on maturation. Disulfide bonds link Cys-48–Cys-70, Cys-55–Cys-74, and Cys-60–Cys-81.

As to expression, expressed by the venom duct.

The protein resides in the secreted. The chain is Turripeptide IX-03 from Gemmula speciosa (Splendid gem-turris).